Consider the following 286-residue polypeptide: Energy-coupling factor transporter ATP-binding protein EcfA2 (286 aa).

The 244-residue stretch at 3 to 246 (IRFDNVSYTY…KEKLADWHIG (244 aa)) folds into the ABC transporter domain. 40–47 (GQTGSGKS) lines the ATP pocket.

It belongs to the ABC transporter superfamily. Energy-coupling factor EcfA family. In terms of assembly, forms a stable energy-coupling factor (ECF) transporter complex composed of 2 membrane-embedded substrate-binding proteins (S component), 2 ATP-binding proteins (A component) and 2 transmembrane proteins (T component).

The protein resides in the cell membrane. In terms of biological role, ATP-binding (A) component of a common energy-coupling factor (ECF) ABC-transporter complex. Unlike classic ABC transporters this ECF transporter provides the energy necessary to transport a number of different substrates. The protein is Energy-coupling factor transporter ATP-binding protein EcfA2 of Staphylococcus aureus (strain MRSA252).